We begin with the raw amino-acid sequence, 286 residues long: uncharacterized protein (286 aa).

The region spanning Val2 to Arg221 is the Radical SAM core domain. Positions 16, 20, and 23 each coordinate [4Fe-4S] cluster.

Belongs to the radical SAM superfamily. Anaerobic sulfatase-maturating enzyme family. Requires [4Fe-4S] cluster as cofactor.

This is an uncharacterized protein from Methanocaldococcus jannaschii (strain ATCC 43067 / DSM 2661 / JAL-1 / JCM 10045 / NBRC 100440) (Methanococcus jannaschii).